The chain runs to 203 residues: Guanylate kinase (203 aa).

The Guanylate kinase-like domain occupies 4 to 183 (GKLFVISAPS…ASTLLKSIIW (180 aa)). ATP is bound at residue 11-18 (APSGAGKT).

This sequence belongs to the guanylate kinase family.

It localises to the cytoplasm. It carries out the reaction GMP + ATP = GDP + ADP. Its function is as follows. Essential for recycling GMP and indirectly, cGMP. The sequence is that of Guanylate kinase from Desulfotalea psychrophila (strain LSv54 / DSM 12343).